Consider the following 469-residue polypeptide: UDP-N-acetylmuramate--L-alanine ligase (469 aa).

122–128 (GTHGKTT) provides a ligand contact to ATP.

The protein belongs to the MurCDEF family.

The protein resides in the cytoplasm. The catalysed reaction is UDP-N-acetyl-alpha-D-muramate + L-alanine + ATP = UDP-N-acetyl-alpha-D-muramoyl-L-alanine + ADP + phosphate + H(+). Its pathway is cell wall biogenesis; peptidoglycan biosynthesis. Functionally, cell wall formation. This Legionella pneumophila subsp. pneumophila (strain Philadelphia 1 / ATCC 33152 / DSM 7513) protein is UDP-N-acetylmuramate--L-alanine ligase.